The primary structure comprises 549 residues: mRNA-capping enzyme subunit beta (549 aa).

Ser-2 carries the N-acetylserine modification. At Ser-15 the chain carries Phosphoserine. The disordered stretch occupies residues 30–169 (LQKLSEAANG…QGNEGNIASN (140 aa)). The segment covering 86–96 (DDEETDTDDEM) has biased composition (acidic residues). Ser-124 carries the phosphoserine modification. The segment covering 135–157 (AKLEKPSDDSIHQNSKSDEEQRI) has biased composition (basic and acidic residues). Lys-223 acts as the N6-GMP-lysine intermediate in catalysis.

The protein belongs to the fungal TPase family. As to quaternary structure, heterodimer. The mRNA-capping enzyme is composed of two separate chains alpha and beta, respectively a mRNA guanylyltransferase and an mRNA 5'-triphosphate monophosphatase. Requires Mg(2+) as cofactor.

It is found in the nucleus. The enzyme catalyses a 5'-end triphospho-ribonucleoside in mRNA + H2O = a 5'-end diphospho-ribonucleoside in mRNA + phosphate + H(+). First step of mRNA capping. Converts the 5'-triphosphate end of a nascent mRNA chain into a diphosphate end. This is mRNA-capping enzyme subunit beta (CET1) from Saccharomyces cerevisiae (strain ATCC 204508 / S288c) (Baker's yeast).